The sequence spans 638 residues: RAF proto-oncogene serine/threonine-protein kinase (638 aa).

The residue at position 43 (S43) is a Phosphoserine. Residues 56 to 130 form the RBD domain; sequence STMRVYLPNK…VGAELQVDFL (75 aa). The segment at 137-183 adopts a Phorbol-ester/DAG-type zinc-finger fold; that stretch reads THNFVRKTFLKLAFCDICQKFLLNAFRCQTCGYKFHEHCSTKVPTMC. Zn(2+) contacts are provided by H138, C151, C154, C164, C167, H172, C175, and C183. S257 bears the Phosphoserine mark. Position 266 is a phosphothreonine; by autocatalysis (T266). A disordered region spans residues 279–323; that stretch reads LRSHSESGSPNNLSPTGWSNAKAPAPTHREKAASSTGQEKNKIRA. Residues 284 to 297 show a composition bias toward polar residues; the sequence is ESGSPNNLSPTGWS. The residue at position 329 (S329) is a Phosphoserine. Residues 340 to 600 enclose the Protein kinase domain; sequence VMLSSRIGSG…PQILSSIELL (261 aa). Residues 346 to 354 and K366 each bind ATP; that span reads IGSGSFGTV. The active-site Proton acceptor is the D459. A Phosphoserine modification is found at S490.

Belongs to the protein kinase superfamily. TKL Ser/Thr protein kinase family. RAF subfamily. It depends on Zn(2+) as a cofactor. Phosphorylation at Ser-257 inactivates kinase activity. Dephosphorylation of Ser-257 by a complex containing protein phosphatase 1 relieves inactivation, leading to stimulate RAF1 activity.

Its subcellular location is the cytoplasm. The protein resides in the cell membrane. It catalyses the reaction L-seryl-[protein] + ATP = O-phospho-L-seryl-[protein] + ADP + H(+). The enzyme catalyses L-threonyl-[protein] + ATP = O-phospho-L-threonyl-[protein] + ADP + H(+). Functionally, serine/threonine-protein kinase that acts as a regulatory link between the membrane-associated Ras GTPases and the MAPK/ERK cascade, and this critical regulatory link functions as a switch determining cell fate decisions. RAF1 activation initiates a mitogen-activated protein kinase (MAPK) cascade that comprises a sequential phosphorylation of the dual-specific MAPK kinases (MAP2K1/MEK1 and MAP2K2/MEK2) and the extracellular signal-regulated kinases (MAPK3/ERK1 and MAPK1/ERK2). This chain is RAF proto-oncogene serine/threonine-protein kinase (raf1), found in Xenopus laevis (African clawed frog).